Here is a 121-residue protein sequence, read N- to C-terminus: Large ribosomal subunit protein bL19 (121 aa).

The protein belongs to the bacterial ribosomal protein bL19 family.

This protein is located at the 30S-50S ribosomal subunit interface and may play a role in the structure and function of the aminoacyl-tRNA binding site. This Gloeobacter violaceus (strain ATCC 29082 / PCC 7421) protein is Large ribosomal subunit protein bL19.